We begin with the raw amino-acid sequence, 555 residues long: Carboxypeptidase Y homolog A (555 aa).

The first 17 residues, 1–17 (MRGLATTLLIGAAAAAT), serve as a signal peptide directing secretion. Residues 18-136 (YPAQQVLKAP…RLETFDLRVK (119 aa)) constitute a propeptide that is removed on maturation. Disulfide bonds link C191–C430, C325–C339, C349–C372, C356–C365, and C394–C400. N222 carries an N-linked (GlcNAc...) asparagine glycan. S278 is an active-site residue. Residue D469 is part of the active site. N520 carries N-linked (GlcNAc...) asparagine glycosylation. Residue H531 is part of the active site.

Belongs to the peptidase S10 family.

The protein localises to the vacuole. The catalysed reaction is Release of a C-terminal amino acid with broad specificity.. Its function is as follows. Vacuolar carboxypeptidase involved in degradation of small peptides. Digests preferentially peptides containing an aliphatic or hydrophobic residue in P1' position, as well as methionine, leucine or phenylalanine in P1 position of ester substrate. This chain is Carboxypeptidase Y homolog A (cpyA), found in Talaromyces marneffei (strain ATCC 18224 / CBS 334.59 / QM 7333) (Penicillium marneffei).